Consider the following 193-residue polypeptide: uncharacterized protein (193 aa).

The next 4 membrane-spanning stretches (helical) occupy residues 40–56 (LYIASLAGFIFGLLKLI), 63–79 (AAGLFVFPIKGIISSLC), 86–110 (CSGYMLATFLSLFSLALIIVGIVSC), and 117–138 (FIFPIISIGMALATTETCFQIY). Positions 158 to 193 (TTTKLSRSSSAPDLSCPSLSTQPTSPNQSLSAYKKY) are disordered.

It belongs to the chlamydial CPn_0442/CT_006/TC_0274 family.

The protein localises to the cell membrane. This is an uncharacterized protein from Chlamydia muridarum (strain MoPn / Nigg).